We begin with the raw amino-acid sequence, 324 residues long: uncharacterized protein (324 aa).

Residues 1-11 (MNTNINVNGSN) show a composition bias toward polar residues. 3 disordered regions span residues 1 to 77 (MNTN…YSYS), 132 to 194 (NNHY…NNNN), and 272 to 324 (DENI…DNDS). Positions 21-64 (NENNNNNNGRNNNTNNNNNGRYNNNNNNNNNNNNNNYNLNMNST) are enriched in low complexity. Over residues 279 to 324 (SNNNNNNNNNNNNSYNVNICRNNSNFNVNENNGGDNNNDNNNDNDS) the composition is skewed to low complexity.

This is an uncharacterized protein from Dictyostelium discoideum (Social amoeba).